Reading from the N-terminus, the 408-residue chain is 5-hydroxytryptamine receptor 1A (408 aa).

Topologically, residues 1-32 are extracellular; that stretch reads MDASNNTTSWNILQRGRMGPSWRRCPVSYQII. Residues N5 and N6 are each glycosylated (N-linked (GlcNAc...) asparagine). Residues 33–53 traverse the membrane as a helical segment; that stretch reads ASLFLGRSFSAGIFGNACVIA. The Cytoplasmic segment spans residues 54–67; it reads AIALERSLQNVANY. The helical transmembrane segment at 68 to 92 threads the bilayer; that stretch reads LIGSLAVTDLMVSVLVLPMAAQNQV. The Extracellular portion of the chain corresponds to 93–101; it reads LNKWTLGQV. Residues 102–126 traverse the membrane as a helical segment; that stretch reads TCDIFISLDVLCCTSSILHLCAIAL. A disulfide bond links C103 and C181. Residues D110 and C114 each contribute to the serotonin site. The short motif at 127–129 is the DRY motif; important for ligand-induced conformation changes element; the sequence is DRY. Residues 127–146 are Cytoplasmic-facing; that stretch reads DRYWAITDPIDYVNKRTPRR. A helical membrane pass occupies residues 147–168; it reads AAVLISITWIVGFSISIPPMLG. Residues 169 to 187 lie on the Extracellular side of the membrane; the sequence is WRTPEDRSDPNACRISEDP. The chain crosses the membrane as a helical span at residues 188–210; it reads GYTIYSTFGAFYIPLILMLVLYG. At 211–333 the chain is on the cytoplasmic side; it reads KIFKAARFRI…LARERKTVKT (123 aa). Residues 235–255 form a disordered region; sequence TCLSVSQQSPKEKQRGAQQEL. Residues K332, T333, and G339 each coordinate 1D-myo-inositol 4-phosphate. Residues 334-357 traverse the membrane as a helical segment; sequence LGIIMGTFILCWLPFFIVALVLPF. Residues 358–364 lie on the Extracellular side of the membrane; that stretch reads CETCHMP. Residues 365–389 traverse the membrane as a helical segment; the sequence is HLLFDIITWLGYSNSLLNPIIYAYF. The short motif at 382–386 is the NPxxY motif; important for ligand-induced conformation changes and signaling element; the sequence is NPIIY. Residues F389, N390, and K391 each contribute to the 1D-myo-inositol 4-phosphate site. Residues 390-408 lie on the Cytoplasmic side of the membrane; sequence NKDFQSAFKKIIKCKFCRQ.

The protein belongs to the G-protein coupled receptor 1 family. 5-hydroxytryptamine receptor subfamily. HTR1A sub-subfamily. As to expression, first expressed in the rostral part of the brain stem at stage 22. At later stages of development, expression is localized to serotonergic neurons. The expression pattern changes in the tadpole of stage 41 where, in addition to serotonergic neurons, expression is also localized to the inner nuclear layer (INL) of the developing retina. This expression pattern continues through to the start of metamorphosis (stage 46). In adults, expressed in the brain, in particular the telencephalon, diencephalon and mesencephalon. In the telencephalic region, expression is localized to the lateral, dorsal and medial pallium, and in the striatum, septum and amygdala. In the mesencephalic region, expression is strongest in the optic tectum and torus semicircularis with moderate levels of expression in tegmental nuclei. In diencephalon, localized to the dorsal and ventral thalamus and the preoptic area of the hypothalamus.

The protein localises to the cell membrane. With respect to regulation, G-protein coupled receptor activity is regulated by lipids: phosphatidylinositol 4-phosphate increases HTR1A-mediated activity. In terms of biological role, G-protein coupled receptor for 5-hydroxytryptamine (serotonin). Also functions as a receptor for various drugs and psychoactive substances. Ligand binding causes a conformation change that triggers signaling via guanine nucleotide-binding proteins (G proteins) and modulates the activity of downstream effectors, such as adenylate cyclase. HTR1A is coupled to G(i)/G(o) G alpha proteins and mediates inhibitory neurotransmission: signaling inhibits adenylate cyclase activity and activates a phosphatidylinositol-calcium second messenger system that regulates the release of Ca(2+) ions from intracellular stores. Beta-arrestin family members regulate signaling by mediating both receptor desensitization and resensitization processes. Activation of the receptor may play a role in the exit from G0 phase and in promoting DNA synthesis. This chain is 5-hydroxytryptamine receptor 1A, found in Xenopus laevis (African clawed frog).